Here is a 3326-residue protein sequence, read N- to C-terminus: Protein unc-80 homolog (3326 aa).

Positions 152–164 (IENQGSPGQPCRS) are enriched in polar residues. 4 disordered regions span residues 152–178 (IENQ…RKTF), 243–267 (KRSS…QQGE), 283–317 (PKAT…RASL), and 450–469 (RKED…GKRR). Ser257 carries the post-translational modification Phosphoserine. Over residues 283–308 (PKATISGCHQGNSFDGSLSSQTSQER) the composition is skewed to polar residues. Ser526 carries the post-translational modification Phosphoserine. Disordered stretches follow at residues 536-560 (LSAR…SHGE), 697-785 (RKKS…DNIP), 967-1076 (GKKV…SRRI), 1405-1430 (EDSK…KKVP), and 1469-1516 (SSKL…LSNA). Basic and acidic residues-rich tracts occupy residues 551 to 560 (LPDHSNSHGE) and 699 to 713 (KSEN…KRPS). Residues 723–737 (SSSSTSGFGAPSASG) are compositionally biased toward low complexity. The segment covering 738–770 (AGDGGGEEGGGGDGGGGGGGGDGGGGGGGGGGP) has biased composition (gly residues). Residues 772–783 (EKNEKNQEKDDN) show a composition bias toward basic and acidic residues. Low complexity predominate over residues 1038–1055 (SQSAASDTSSQSEQDTSE). The span at 1418-1429 (IKSDAGAEEKKV) shows a compositional bias: basic and acidic residues. 2 helical membrane passes run 2336-2356 (PFVL…DAAN) and 2466-2486 (IAAT…VEVL). The segment at 2493-2515 (PQMSRSDQGHKGTTTANHTMSSG) is disordered. Transmembrane regions (helical) follow at residues 2853–2873 (GLAE…LVCF) and 2899–2919 (LALW…FVLL). The span at 3010-3032 (NTGTGTVWEQDSEPSQQASQDTL) shows a compositional bias: polar residues. The interval 3010–3052 (NTGTGTVWEQDSEPSQQASQDTLSRTDEEDEENDSVSMPSVVS) is disordered. Ser3110 bears the Phosphoserine mark. Disordered regions lie at residues 3122 to 3222 (LQQP…VLTS), 3236 to 3271 (PKQS…LSDP), and 3296 to 3326 (NGTE…ESHV). Residues 3127 to 3136 (GRKRGLRQLR) are compositionally biased toward basic residues. Positions 3157-3168 (LSTTRRSIQPKT) are enriched in polar residues. A compositionally biased stretch (polar residues) spans 3298–3309 (TENPLLSSQFTF). Acidic residues predominate over residues 3315 to 3326 (GDTDSALDESHV).

It belongs to the unc-80 family. In terms of assembly, NALCN complex consists of NALCN and auxiliary subunits, UNC79, UNC80 and NACL1. These auxiliary subunits are essential for the NALCN complex function. Interacts (via N-terminus half) with NALCN; this interaction facilitates NALCN surface localization. Interacts (via C-terminus) with UNC79. UNC80 bridges NALCN to UNC79. Phosphorylated on tyrosine residues. Expressed almost exclusively in the brain. Expressed in hippocampus and ventral tegmental area neurons.

Its subcellular location is the cell membrane. It localises to the cell projection. The protein localises to the dendrite. Auxiliary subunit of the NALCN sodium channel complex. The NALCN sodium channel complex is a voltage-gated ion channel responsible for the resting Na(+) permeability that controls neuronal excitability. This complex is activated by neuropeptides substance P, neurotensin. In addition, the channel is inhibited by extracellular Ca(2+) through the Ca(2+)-sensing receptor. UNC80 is essential for NALCN sensitivity to extracellular calcium. The chain is Protein unc-80 homolog (Unc80) from Mus musculus (Mouse).